Reading from the N-terminus, the 344-residue chain is UDP-3-O-acylglucosamine N-acyltransferase (344 aa).

The active-site Proton acceptor is the His-250.

The protein belongs to the transferase hexapeptide repeat family. LpxD subfamily. In terms of assembly, homotrimer.

The catalysed reaction is a UDP-3-O-[(3R)-3-hydroxyacyl]-alpha-D-glucosamine + a (3R)-hydroxyacyl-[ACP] = a UDP-2-N,3-O-bis[(3R)-3-hydroxyacyl]-alpha-D-glucosamine + holo-[ACP] + H(+). The protein operates within bacterial outer membrane biogenesis; LPS lipid A biosynthesis. Functionally, catalyzes the N-acylation of UDP-3-O-acylglucosamine using 3-hydroxyacyl-ACP as the acyl donor. Is involved in the biosynthesis of lipid A, a phosphorylated glycolipid that anchors the lipopolysaccharide to the outer membrane of the cell. This chain is UDP-3-O-acylglucosamine N-acyltransferase, found in Maricaulis maris (strain MCS10) (Caulobacter maris).